A 206-amino-acid chain; its full sequence is Urease accessory protein UreG (206 aa).

A GTP-binding site is contributed by 14-21 (GPVGSGKT).

It belongs to the SIMIBI class G3E GTPase family. UreG subfamily. Homodimer. UreD, UreF and UreG form a complex that acts as a GTP-hydrolysis-dependent molecular chaperone, activating the urease apoprotein by helping to assemble the nickel containing metallocenter of UreC. The UreE protein probably delivers the nickel.

The protein localises to the cytoplasm. Functionally, facilitates the functional incorporation of the urease nickel metallocenter. This process requires GTP hydrolysis, probably effectuated by UreG. This Brucella anthropi (strain ATCC 49188 / DSM 6882 / CCUG 24695 / JCM 21032 / LMG 3331 / NBRC 15819 / NCTC 12168 / Alc 37) (Ochrobactrum anthropi) protein is Urease accessory protein UreG.